Consider the following 110-residue polypeptide: Thiosulfate sulfurtransferase GlpE (110 aa).

A Rhodanese domain is found at 17-105 (KQEGAVVVDI…WRATYPAETA (89 aa)). C65 acts as the Cysteine persulfide intermediate in catalysis.

The protein belongs to the GlpE family.

The protein resides in the cytoplasm. It carries out the reaction thiosulfate + hydrogen cyanide = thiocyanate + sulfite + 2 H(+). The enzyme catalyses thiosulfate + [thioredoxin]-dithiol = [thioredoxin]-disulfide + hydrogen sulfide + sulfite + 2 H(+). Its function is as follows. Transferase that catalyzes the transfer of sulfur from thiosulfate to thiophilic acceptors such as cyanide or dithiols. May function in a CysM-independent thiosulfate assimilation pathway by catalyzing the conversion of thiosulfate to sulfite, which can then be used for L-cysteine biosynthesis. In Pseudomonas putida (strain GB-1), this protein is Thiosulfate sulfurtransferase GlpE.